The chain runs to 114 residues: Protein U68 (114 aa).

Belongs to the herpesviridae UL96 family.

The protein is Protein U68 (U68) of Human herpesvirus 6A (strain Uganda-1102) (HHV-6 variant A).